The chain runs to 151 residues: Ribosome maturation factor RimP (151 aa).

Belongs to the RimP family.

It is found in the cytoplasm. Its function is as follows. Required for maturation of 30S ribosomal subunits. The chain is Ribosome maturation factor RimP from Hydrogenovibrio crunogenus (strain DSM 25203 / XCL-2) (Thiomicrospira crunogena).